A 179-amino-acid polypeptide reads, in one-letter code: Large ribosomal subunit protein uL5 (179 aa).

This sequence belongs to the universal ribosomal protein uL5 family. As to quaternary structure, part of the 50S ribosomal subunit; part of the 5S rRNA/L5/L18/L25 subcomplex. Contacts the 5S rRNA and the P site tRNA. Forms a bridge to the 30S subunit in the 70S ribosome.

Its function is as follows. This is one of the proteins that bind and probably mediate the attachment of the 5S RNA into the large ribosomal subunit, where it forms part of the central protuberance. In the 70S ribosome it contacts protein S13 of the 30S subunit (bridge B1b), connecting the 2 subunits; this bridge is implicated in subunit movement. Contacts the P site tRNA; the 5S rRNA and some of its associated proteins might help stabilize positioning of ribosome-bound tRNAs. This Shewanella pealeana (strain ATCC 700345 / ANG-SQ1) protein is Large ribosomal subunit protein uL5.